Consider the following 549-residue polypeptide: Glucose-6-phosphate isomerase (549 aa).

Glu355 functions as the Proton donor in the catalytic mechanism. Active-site residues include His386 and Lys514.

Belongs to the GPI family.

The protein resides in the cytoplasm. The enzyme catalyses alpha-D-glucose 6-phosphate = beta-D-fructose 6-phosphate. It participates in carbohydrate biosynthesis; gluconeogenesis. It functions in the pathway carbohydrate degradation; glycolysis; D-glyceraldehyde 3-phosphate and glycerone phosphate from D-glucose: step 2/4. Functionally, catalyzes the reversible isomerization of glucose-6-phosphate to fructose-6-phosphate. This is Glucose-6-phosphate isomerase from Salmonella choleraesuis (strain SC-B67).